The following is a 265-amino-acid chain: Phosphate import ATP-binding protein PstB (265 aa).

Residues 18 to 260 (ISARDVQVFY…PEDPRTESYI (243 aa)) form the ABC transporter domain. Residue 50 to 57 (GPSGCGKS) participates in ATP binding.

The protein belongs to the ABC transporter superfamily. Phosphate importer (TC 3.A.1.7) family. The complex is composed of two ATP-binding proteins (PstB), two transmembrane proteins (PstC and PstA) and a solute-binding protein (PstS).

It is found in the cell inner membrane. It catalyses the reaction phosphate(out) + ATP + H2O = ADP + 2 phosphate(in) + H(+). Part of the ABC transporter complex PstSACB involved in phosphate import. Responsible for energy coupling to the transport system. This is Phosphate import ATP-binding protein PstB from Roseobacter denitrificans (strain ATCC 33942 / OCh 114) (Erythrobacter sp. (strain OCh 114)).